Consider the following 254-residue polypeptide: Dihydroorotate dehydrogenase B (NAD(+)), electron transfer subunit (254 aa).

Positions 1-99 (MLQTEMKVIQ…LGPLGKGFDI (99 aa)) constitute an FAD-binding FR-type domain. FAD-binding positions include 50-53 (RPIS), 67-69 (LYR), and 74-75 (GT). Positions 218, 223, 226, and 241 each coordinate [2Fe-2S] cluster.

Belongs to the PyrK family. Heterotetramer of 2 PyrK and 2 PyrD type B subunits. The cofactor is [2Fe-2S] cluster. It depends on FAD as a cofactor.

It functions in the pathway pyrimidine metabolism; UMP biosynthesis via de novo pathway; orotate from (S)-dihydroorotate (NAD(+) route): step 1/1. Its function is as follows. Responsible for channeling the electrons from the oxidation of dihydroorotate from the FMN redox center in the PyrD type B subunit to the ultimate electron acceptor NAD(+). The chain is Dihydroorotate dehydrogenase B (NAD(+)), electron transfer subunit from Listeria monocytogenes serotype 4b (strain F2365).